We begin with the raw amino-acid sequence, 325 residues long: GMP reductase (325 aa).

The Thioimidate intermediate role is filled by Cys174. NADP(+) is bound at residue 203–226 (IIADGGIRTHGDIAKSIRFGATMV).

It belongs to the IMPDH/GMPR family. GuaC type 2 subfamily.

The catalysed reaction is IMP + NH4(+) + NADP(+) = GMP + NADPH + 2 H(+). In terms of biological role, catalyzes the irreversible NADPH-dependent deamination of GMP to IMP. It functions in the conversion of nucleobase, nucleoside and nucleotide derivatives of G to A nucleotides, and in maintaining the intracellular balance of A and G nucleotides. The chain is GMP reductase from Helicobacter pylori (strain J99 / ATCC 700824) (Campylobacter pylori J99).